A 519-amino-acid polypeptide reads, in one-letter code: Putative ATP-dependent RNA helicase L396 (519 aa).

In terms of domain architecture, Helicase ATP-binding spans 110-258; the sequence is IKGMEEGGGG…IINWYMGPIL (149 aa). ATP is bound at residue 123-130; sequence MGCGSGKT. Positions 211-214 match the DEAH box motif; sequence DEVH. Residues 317 to 457 form the Helicase C-terminal domain; that stretch reads YLIQELFDMG…KQKYNIQKYY (141 aa).

The protein belongs to the DEAD box helicase family. DEAH subfamily.

It carries out the reaction ATP + H2O = ADP + phosphate + H(+). This is Putative ATP-dependent RNA helicase L396 from Acanthamoeba polyphaga (Amoeba).